We begin with the raw amino-acid sequence, 315 residues long: Protein translocase subunit SecF (315 aa).

6 helical membrane-spanning segments follow: residues 12–32, 136–156, 166–186, 188–208, 247–267, and 271–291; these read AWIV…ISWA, ALFR…IIYL, VFAI…FAIF, LVGG…IIGF, SINT…FGGD, and FFAL…IFMA.

This sequence belongs to the SecD/SecF family. SecF subfamily. As to quaternary structure, forms a complex with SecD. Part of the essential Sec protein translocation apparatus which comprises SecA, SecYEG and auxiliary proteins SecDF. Other proteins may also be involved.

It is found in the cell inner membrane. In terms of biological role, part of the Sec protein translocase complex. Interacts with the SecYEG preprotein conducting channel. SecDF uses the proton motive force (PMF) to complete protein translocation after the ATP-dependent function of SecA. Probably participates in protein translocation into and across both the cytoplasmic and thylakoid membranes in cyanobacterial cells. This is Protein translocase subunit SecF from Synechocystis sp. (strain ATCC 27184 / PCC 6803 / Kazusa).